The chain runs to 213 residues: Orotate phosphoribosyltransferase (213 aa).

5-phospho-alpha-D-ribose 1-diphosphate is bound at residue Lys26. 34-35 lines the orotate pocket; that stretch reads FF. 5-phospho-alpha-D-ribose 1-diphosphate is bound by residues 72-73, Arg99, Lys100, Lys103, His105, and 124-132; these read YK and DDVITAGTA. 2 residues coordinate orotate: Thr128 and Arg156.

This sequence belongs to the purine/pyrimidine phosphoribosyltransferase family. PyrE subfamily. As to quaternary structure, homodimer. Mg(2+) is required as a cofactor.

The enzyme catalyses orotidine 5'-phosphate + diphosphate = orotate + 5-phospho-alpha-D-ribose 1-diphosphate. It functions in the pathway pyrimidine metabolism; UMP biosynthesis via de novo pathway; UMP from orotate: step 1/2. In terms of biological role, catalyzes the transfer of a ribosyl phosphate group from 5-phosphoribose 1-diphosphate to orotate, leading to the formation of orotidine monophosphate (OMP). The chain is Orotate phosphoribosyltransferase from Escherichia coli O157:H7.